Consider the following 367-residue polypeptide: DNA replication and repair protein RecF (367 aa).

31-38 (GENGSGKT) provides a ligand contact to ATP.

It belongs to the RecF family.

The protein resides in the cytoplasm. The RecF protein is involved in DNA metabolism; it is required for DNA replication and normal SOS inducibility. RecF binds preferentially to single-stranded, linear DNA. It also seems to bind ATP. The chain is DNA replication and repair protein RecF from Saccharophagus degradans (strain 2-40 / ATCC 43961 / DSM 17024).